Here is a 388-residue protein sequence, read N- to C-terminus: Cystathionine gamma-synthase (388 aa).

Lys-208 carries the N6-(pyridoxal phosphate)lysine modification.

Belongs to the trans-sulfuration enzymes family. As to quaternary structure, homotetramer. The cofactor is pyridoxal 5'-phosphate.

It localises to the cytoplasm. It catalyses the reaction O-succinyl-L-homoserine + L-cysteine = L,L-cystathionine + succinate + H(+). Its function is as follows. Catalyzes the formation of L-cystathionine from O-succinyl-L-homoserine (OSHS) and L-cysteine, via a gamma-replacement reaction. In the absence of thiol, catalyzes gamma-elimination to form 2-oxobutanoate, succinate and ammonia. The polypeptide is Cystathionine gamma-synthase (metB) (Mycobacterium leprae (strain TN)).